Reading from the N-terminus, the 564-residue chain is 60 kDa lysophospholipase (564 aa).

The Asparaginase/glutaminase domain occupies 9–355 (RRLLAIYTGG…NDRKKLLAKD (347 aa)). The Acyl-ester intermediate role is filled by T19. The segment at 41–350 (TLHMFHDEEY…PGLSLNDRKK (310 aa)) is asparaginase. Substrate contacts are provided by residues 84–86 (DSS) and 116–117 (TD). 5 ANK repeats span residues 141-170 (GAQVPIHALWSDGRENLLGALLMAGQYVIP), 396-426 (VLLPGLALAAAHAGDLDTLQAFVELDRDLNL), 430-459 (SGQTPLHVAARRGHAAVVTMLLQRGADVDA), 463-492 (DGQSPLLLAVRGRHQSVIGLLRAAGARLSP), and 530-559 (DGHCALQVAEAAGNADVVALLQSFKDSVCA). S478 is modified (phosphoserine).

It in the N-terminal section; belongs to the asparaginase 1 family. In terms of assembly, monomer.

The catalysed reaction is a 1-acyl-sn-glycero-3-phosphocholine + H2O = sn-glycerol 3-phosphocholine + a fatty acid + H(+). The enzyme catalyses L-asparagine + H2O = L-aspartate + NH4(+). It carries out the reaction a 1-O-alkyl-2-acetyl-sn-glycero-3-phosphocholine + H2O = a 1-O-alkyl-sn-glycero-3-phosphocholine + acetate + H(+). It catalyses the reaction 1-hexadecanoyl-sn-glycero-3-phosphocholine + H2O = sn-glycerol 3-phosphocholine + hexadecanoate + H(+). The catalysed reaction is 2 1-hexadecanoyl-sn-glycero-3-phosphocholine = 1,2-dihexadecanoyl-sn-glycero-3-phosphocholine + sn-glycerol 3-phosphocholine. The enzyme catalyses 1-octadecanoyl-sn-glycero-3-phosphocholine + H2O = octadecanoate + sn-glycerol 3-phosphocholine + H(+). It carries out the reaction 1-(9Z-octadecenoyl)-sn-glycero-3-phosphocholine + H2O = sn-glycerol 3-phosphocholine + (9Z)-octadecenoate + H(+). It catalyses the reaction 1-hexadecanoyl-sn-glycero-3-phosphoethanolamine + H2O = sn-glycero-3-phosphoethanolamine + hexadecanoate + H(+). The catalysed reaction is 1-(9Z-octadecenoyl)-sn-glycero-3-phosphoethanolamine + H2O = sn-glycero-3-phosphoethanolamine + (9Z)-octadecenoate + H(+). The enzyme catalyses 1-hexadecanoyl-sn-glycero-3-phosphoethanolamine + 1-hexadecanoyl-sn-glycero-3-phosphocholine = 1,2-dihexadecanoyl-sn-glycero-3-phosphoethanolamine + sn-glycerol 3-phosphocholine. It carries out the reaction 2-(5Z,8Z,11Z,14Z)-eicosatetraenoyl-sn-glycero-3-phosphocholine + H2O = sn-glycerol 3-phosphocholine + (5Z,8Z,11Z,14Z)-eicosatetraenoate + H(+). It catalyses the reaction 2-hexadecanoyl-sn-glycero-3-phosphocholine + H2O = sn-glycerol 3-phosphocholine + hexadecanoate + H(+). The catalysed reaction is 2 2-hexadecanoyl-sn-glycero-3-phosphocholine = 1,2-dihexadecanoyl-sn-glycero-3-phosphocholine + sn-glycerol 3-phosphocholine. The enzyme catalyses 1-O-(9Z)-octadecenoyl-2-O-acetyl-sn-glycero-3-phosphocholine + H2O = 2-acetyl-sn-glycero-3-phosphocholine + (9Z)-octadecenoate + H(+). It carries out the reaction a 1-acyl-sn-glycero-3-phospho-(1D-myo-inositol) + 1-hexadecanoyl-sn-glycero-3-phosphocholine = a 1-acyl-2-hexadecanoyl-sn-glycero-3-phospho-(1D-myo-inositol) + sn-glycerol 3-phosphocholine. It catalyses the reaction 2 2-(5Z,8Z,11Z,14Z)-eicosatetraenoyl-sn-glycero-3-phosphocholine = 1,2-di-(5Z,8Z,11Z,14Z-eicosatetraenoyl)-sn-glycero-3-phosphocholine + sn-glycerol 3-phosphocholine. Functionally, exhibits lysophospholipase, transacylase, PAF acetylhydrolase and asparaginase activities. Can catalyze three types of transacylation reactions: (1) acyl transfer from 1-acyl-sn-glycero-3-phosphocholine (1-acyl-GPC) to the sn-1(3) positions of glycerol and 2-acylglycerol (sn-1 to -1(3) transfer), (2) acyl transfer from 1-acyl-GPC to the sn-2 positions of 1-acyl-GPC, 1-acyl-sn-glycero-3-phosphoethanolamine (1-acyl-GPE), and other lysophospholipids (sn-1 to -2 transfer) and (3) acyl transfer from 2-acyl-GPC to the sn-1 position of 2-acyl-GPC and 2-acyl-GPE (sn-2 to -1 transfer). Mediates the synthesis of 1-arachidonoyl species of phospholipids by transferring the arachidonoyl residue from 2-arachidonoyl lysophospholipid to the sn-1 position of 2-acyl lysophospholipid. In Mus musculus (Mouse), this protein is 60 kDa lysophospholipase (Aspg).